The sequence spans 217 residues: Ras-related protein RABA1g (217 aa).

20 to 27 (GDSGVGKS) contacts GTP. The Effector region motif lies at 42 to 50 (SKSTIGVEF). GTP is bound by residues 68 to 72 (DTAGQ), 126 to 129 (NKAD), and 156 to 157 (SA). Residues Cys214 and Cys215 are each lipidated (S-geranylgeranyl cysteine).

Belongs to the small GTPase superfamily. Rab family.

It localises to the cell membrane. Intracellular vesicle trafficking and protein transport. This is Ras-related protein RABA1g (RABA1G) from Arabidopsis thaliana (Mouse-ear cress).